Here is a 152-residue protein sequence, read N- to C-terminus: FMN reductase (NADH) RutF (152 aa).

Belongs to the non-flavoprotein flavin reductase family. RutF subfamily.

The enzyme catalyses FMNH2 + NAD(+) = FMN + NADH + 2 H(+). Its function is as follows. Catalyzes the reduction of FMN to FMNH2 which is used to reduce pyrimidine by RutA via the Rut pathway. This Shigella dysenteriae serotype 1 (strain Sd197) protein is FMN reductase (NADH) RutF.